A 300-amino-acid chain; its full sequence is Ornithine carbamoyltransferase (300 aa).

Residues 49–52 (STRT), Gln-76, Arg-100, and 127–130 (HPCQ) each bind carbamoyl phosphate. Residues Asn-158, Asp-218, and 222–223 (SM) contribute to the L-ornithine site. Carbamoyl phosphate-binding positions include 258 to 259 (CL) and Arg-286.

The protein belongs to the aspartate/ornithine carbamoyltransferase superfamily. OTCase family.

The protein localises to the cytoplasm. The catalysed reaction is carbamoyl phosphate + L-ornithine = L-citrulline + phosphate + H(+). Its pathway is amino-acid biosynthesis; L-arginine biosynthesis; L-arginine from L-ornithine and carbamoyl phosphate: step 1/3. Its function is as follows. Reversibly catalyzes the transfer of the carbamoyl group from carbamoyl phosphate (CP) to the N(epsilon) atom of ornithine (ORN) to produce L-citrulline. This chain is Ornithine carbamoyltransferase, found in Oleidesulfovibrio alaskensis (strain ATCC BAA-1058 / DSM 17464 / G20) (Desulfovibrio alaskensis).